We begin with the raw amino-acid sequence, 198 residues long: Sortase D (198 aa).

The chain crosses the membrane as a helical span at residues 7–25 (LFIIAAGLVIAGYGGFKLI). Basic and acidic residues predominate over residues 36–46 (KEAKLAAKKPQ). The disordered stretch occupies residues 36–67 (KEAKLAAKKPQEASGTKNSTDQAKNKASFKPE). The span at 48-57 (ASGTKNSTDQ) shows a compositional bias: polar residues. H119 (proton donor/acceptor) is an active-site residue. Catalysis depends on C177, which acts as the Acyl-thioester intermediate.

Belongs to the bacterial sortase family. Class D subfamily.

It is found in the cell membrane. Functionally, transpeptidase that anchors surface proteins to the cell wall. Recognizes and modifies its substrate by proteolytic cleavage of a C-terminal sorting signal. Following cleavage, a covalent intermediate is formed via a thioester bond between the sortase and its substrate, which is then transferred and covalently attached to the cell wall. This sortase recognizes a Leu-Pro-Asp-Thr-Ser/Ala (LPDTS/A) motif. It has two substrates, YhcR and YfkN. This Bacillus subtilis (strain 168) protein is Sortase D.